We begin with the raw amino-acid sequence, 505 residues long: Glutamate--tRNA ligase (505 aa).

The short motif at 12–22 (PSPTGPLHIGG) is the 'HIGH' region element. The 'KMSKS' region signature appears at 260-264 (KLSKR). Lys-263 provides a ligand contact to ATP.

It belongs to the class-I aminoacyl-tRNA synthetase family. Glutamate--tRNA ligase type 1 subfamily. Monomer.

Its subcellular location is the cytoplasm. The enzyme catalyses tRNA(Glu) + L-glutamate + ATP = L-glutamyl-tRNA(Glu) + AMP + diphosphate. Functionally, catalyzes the attachment of glutamate to tRNA(Glu) in a two-step reaction: glutamate is first activated by ATP to form Glu-AMP and then transferred to the acceptor end of tRNA(Glu). The protein is Glutamate--tRNA ligase of Porphyromonas gingivalis (strain ATCC BAA-308 / W83).